The sequence spans 230 residues: LexA repressor (230 aa).

Residues 28 to 48 constitute a DNA-binding region (H-T-H motif); that stretch reads LREIGAHMGIRSTNGVNDHLR. Residues S149 and K186 each act as for autocatalytic cleavage activity in the active site.

This sequence belongs to the peptidase S24 family. As to quaternary structure, homodimer.

It catalyses the reaction Hydrolysis of Ala-|-Gly bond in repressor LexA.. Represses a number of genes involved in the response to DNA damage (SOS response), including recA and lexA. In the presence of single-stranded DNA, RecA interacts with LexA causing an autocatalytic cleavage which disrupts the DNA-binding part of LexA, leading to derepression of the SOS regulon and eventually DNA repair. The protein is LexA repressor of Sorangium cellulosum (strain So ce56) (Polyangium cellulosum (strain So ce56)).